The following is a 529-amino-acid chain: Glycylpeptide N-tetradecanoyltransferase (529 aa).

A compositionally biased stretch (polar residues) spans 1-10; that stretch reads MSEQEGNQSE. Residues 1 to 65 are disordered; it reads MSEQEGNQSE…ANPATKLTPS (65 aa). Residues 11–23 show a composition bias toward basic and acidic residues; it reads HQSEHVGESEGKL. Residues 26–40 are compositionally biased toward polar residues; the sequence is ETPTTSQSTNASTGT. Residues 118-121, 252-254, and 260-264 each bind tetradecanoyl-CoA; these read FKFW, LCV, and SKRLT. Val-529 (proton acceptor; via carboxylate) is an active-site residue.

This sequence belongs to the NMT family. In terms of assembly, monomer.

The protein localises to the cytoplasm. The enzyme catalyses N-terminal glycyl-[protein] + tetradecanoyl-CoA = N-tetradecanoylglycyl-[protein] + CoA + H(+). Adds a myristoyl group to the N-terminal glycine residue of certain cellular proteins. This is Glycylpeptide N-tetradecanoyltransferase from Ajellomyces capsulatus (Darling's disease fungus).